The following is a 355-amino-acid chain: Histidinol-phosphate aminotransferase 2 (355 aa).

Lysine 210 is modified (N6-(pyridoxal phosphate)lysine).

Belongs to the class-II pyridoxal-phosphate-dependent aminotransferase family. Histidinol-phosphate aminotransferase subfamily. Homodimer. Pyridoxal 5'-phosphate is required as a cofactor.

The enzyme catalyses L-histidinol phosphate + 2-oxoglutarate = 3-(imidazol-4-yl)-2-oxopropyl phosphate + L-glutamate. It participates in amino-acid biosynthesis; L-histidine biosynthesis; L-histidine from 5-phospho-alpha-D-ribose 1-diphosphate: step 7/9. In Gluconobacter oxydans (strain 621H) (Gluconobacter suboxydans), this protein is Histidinol-phosphate aminotransferase 2.